Reading from the N-terminus, the 95-residue chain is Co-chaperonin GroES (95 aa).

This sequence belongs to the GroES chaperonin family. Heptamer of 7 subunits arranged in a ring. Interacts with the chaperonin GroEL.

It is found in the cytoplasm. In terms of biological role, together with the chaperonin GroEL, plays an essential role in assisting protein folding. The GroEL-GroES system forms a nano-cage that allows encapsulation of the non-native substrate proteins and provides a physical environment optimized to promote and accelerate protein folding. GroES binds to the apical surface of the GroEL ring, thereby capping the opening of the GroEL channel. The polypeptide is Co-chaperonin GroES (Clostridium botulinum (strain ATCC 19397 / Type A)).